We begin with the raw amino-acid sequence, 267 residues long: Energy-coupling factor transporter transmembrane protein EcfT (267 aa).

Transmembrane regions (helical) follow at residues isoleucine 26–leucine 46, isoleucine 73–isoleucine 93, leucine 116–threonine 136, valine 151–leucine 171, and leucine 247–phenylalanine 267.

Belongs to the energy-coupling factor EcfT family. As to quaternary structure, forms a stable energy-coupling factor (ECF) transporter complex composed of 2 membrane-embedded substrate-binding proteins (S component), 2 ATP-binding proteins (A component) and 2 transmembrane proteins (T component). May be able to interact with more than 1 S component at a time.

The protein resides in the cell membrane. Its function is as follows. Transmembrane (T) component of an energy-coupling factor (ECF) ABC-transporter complex. Unlike classic ABC transporters this ECF transporter provides the energy necessary to transport a number of different substrates. The polypeptide is Energy-coupling factor transporter transmembrane protein EcfT (Ruminiclostridium cellulolyticum (strain ATCC 35319 / DSM 5812 / JCM 6584 / H10) (Clostridium cellulolyticum)).